A 121-amino-acid chain; its full sequence is MSDTASFRDTLEVFENPAPTRNFTIEHHCPEFTSVCPKTGQPDYGTIVFTYVPDRVCVELKSLKMYLQKFRNEGIFYEQVTNRILDDFVAVVQPRKVTVESKWTPRGGLNSNIIVTYPDEA.

Cys36 acts as the Thioimide intermediate in catalysis. The active-site Proton donor is the Asp43. Substrate-binding positions include 58-60 (VEL) and 77-78 (YE).

It belongs to the GTP cyclohydrolase I family. QueF type 1 subfamily.

The protein localises to the cytoplasm. It catalyses the reaction 7-aminomethyl-7-carbaguanine + 2 NADP(+) = 7-cyano-7-deazaguanine + 2 NADPH + 3 H(+). The protein operates within tRNA modification; tRNA-queuosine biosynthesis. In terms of biological role, catalyzes the NADPH-dependent reduction of 7-cyano-7-deazaguanine (preQ0) to 7-aminomethyl-7-deazaguanine (preQ1). The sequence is that of NADPH-dependent 7-cyano-7-deazaguanine reductase from Rhodopirellula baltica (strain DSM 10527 / NCIMB 13988 / SH1).